Here is a 477-residue protein sequence, read N- to C-terminus: Asparaginyl-tRNA synthetase (477 aa).

Residues 1–14 constitute a mitochondrion transit peptide; it reads MLGARRLLGALRLC. K353 is modified (N6-acetyllysine).

This sequence belongs to the class-II aminoacyl-tRNA synthetase family. Homodimer. Expressed in brain and inner ear, including the cochlear epithelium and organ of Corti.

It is found in the mitochondrion matrix. The protein localises to the mitochondrion. It carries out the reaction tRNA(Asn) + L-asparagine + ATP = L-asparaginyl-tRNA(Asn) + AMP + diphosphate + H(+). Mitochondrial aminoacyl-tRNA synthetase that catalyzes the specific attachment of the asparagine amino acid (aa) to the homologous transfer RNA (tRNA), further participating in protein synthesis. The reaction occurs in a two steps: asparagine is first activated by ATP to form Asn-AMP and then transferred to the acceptor end of tRNA(Asn). The chain is Asparaginyl-tRNA synthetase from Mus musculus (Mouse).